Here is a 611-residue protein sequence, read N- to C-terminus: Rho GTPase-activating protein gacN (611 aa).

Residues 24–219 (KTFKKILKPG…VLIEEFHVLY (196 aa)) enclose the Rho-GAP domain. The stretch at 236-499 (IREDKRSTSE…TKLQKSSSSS (264 aa)) forms a coiled coil. A compositionally biased stretch (basic and acidic residues) spans 476 to 491 (NQLEKEKSKLQDELTK). The disordered stretch occupies residues 476 to 550 (NQLEKEKSKL…TTPPPPLDED (75 aa)). Composition is skewed to low complexity over residues 495 to 509 (SSSS…SSSS) and 527 to 540 (TTTT…AQQP).

It localises to the cytoplasm. Functionally, rho GTPase-activating protein involved in the signal transduction pathway. The protein is Rho GTPase-activating protein gacN (gacN) of Dictyostelium discoideum (Social amoeba).